The sequence spans 358 residues: 3-dehydroquinate synthase (358 aa).

Residues 72-77 (GGERVK), 106-110 (GALLD), 130-131 (ST), Lys143, and Lys151 each bind NAD(+). Residues Glu184, His245, and His261 each coordinate Zn(2+).

Belongs to the sugar phosphate cyclases superfamily. Dehydroquinate synthase family. The cofactor is NAD(+). It depends on Co(2+) as a cofactor. Zn(2+) is required as a cofactor.

It is found in the cytoplasm. It catalyses the reaction 7-phospho-2-dehydro-3-deoxy-D-arabino-heptonate = 3-dehydroquinate + phosphate. The protein operates within metabolic intermediate biosynthesis; chorismate biosynthesis; chorismate from D-erythrose 4-phosphate and phosphoenolpyruvate: step 2/7. In terms of biological role, catalyzes the conversion of 3-deoxy-D-arabino-heptulosonate 7-phosphate (DAHP) to dehydroquinate (DHQ). This Aeropyrum pernix (strain ATCC 700893 / DSM 11879 / JCM 9820 / NBRC 100138 / K1) protein is 3-dehydroquinate synthase (aroB).